The primary structure comprises 481 residues: Probable autolysin LytO (481 aa).

In terms of domain architecture, Peptidase C51 spans 7-148 (KNEFIEWLKT…AYDFPMWFIR (142 aa)). The span at 155-165 (TAPRSVQSPTQ) shows a compositional bias: polar residues. The disordered stretch occupies residues 155-177 (TAPRSVQSPTQAPKKETAKPQPK). Positions 198–323 (SNPKGIVIHN…NEFTSTSCPH (126 aa)) constitute an N-acetylmuramoyl-L-alanine amidase domain. The SH3b domain occupies 398–466 (EESARFTNGN…YLPIRTWNGS (69 aa)).

Belongs to the N-acetylmuramoyl-L-alanine amidase 2 family.

The enzyme catalyses Hydrolyzes the link between N-acetylmuramoyl residues and L-amino acid residues in certain cell-wall glycopeptides.. Its function is as follows. Has weak lytic activity toward S.aureus cells. This Staphylococcus aureus (strain NCTC 8325 / PS 47) protein is Probable autolysin LytO.